The following is a 564-amino-acid chain: Kelch repeat and BTB domain-containing protein 1 (564 aa).

Residues 21–88 (CDIDIVINDE…IYGIPLSLTN (68 aa)) form the BTB domain. The BACK domain occupies 123 to 219 (CIDFYIYADK…SLLSPQVIKS (97 aa)). Kelch repeat units follow at residues 252 to 297 (IELI…VLDN), 298 to 346 (IIYM…ADDE), 347 to 395 (YIYC…MLNG), 397 to 441 (IYVI…VHAG), 442 to 492 (KIYI…SVHN), and 494 to 539 (LYVG…CEPI).

As to quaternary structure, interacts (via BTB domain) with host CUL3.

It is found in the host cytoplasm. Probable substrate-specific adapter of CUL3-containing E3 ubiquitin-protein ligases which mediate the ubiquitination and subsequent proteasomal degradation of host target proteins. The polypeptide is Kelch repeat and BTB domain-containing protein 1 (KBTB1) (Camelus).